The primary structure comprises 194 residues: dTTP/UTP pyrophosphatase (194 aa).

Asp73 serves as the catalytic Proton acceptor.

The protein belongs to the Maf family. YhdE subfamily. Requires a divalent metal cation as cofactor.

It is found in the cytoplasm. The catalysed reaction is dTTP + H2O = dTMP + diphosphate + H(+). It catalyses the reaction UTP + H2O = UMP + diphosphate + H(+). Functionally, nucleoside triphosphate pyrophosphatase that hydrolyzes dTTP and UTP. May have a dual role in cell division arrest and in preventing the incorporation of modified nucleotides into cellular nucleic acids. The protein is dTTP/UTP pyrophosphatase of Clostridium botulinum (strain 657 / Type Ba4).